The chain runs to 447 residues: MCSTKVPNERTEKMNSGLISTRHQVDPKKELSRILRTDAAVKGIERKANSEKYLTLWPKAVLEALDEAIKENRWQSALKIFNLLRKQHWYEPRCKTYTKLFKVLGNCKQPDQASLLFEVMLSEGLKPTIDVYTSLISVYGKSELLDKAFSTLEYMKSVSDCKPDVFTFTVLISCCCKLGRFDLVKSIVLEMSYLGVGCSTVTYNTIIDGYGKAGMFEEMESVLADMIEDGDSLPDVCTLNSIIGSYGNGRNMRKMESWYSRFQLMGVQPDITTFNILILSFGKAGMYKKMCSVMDFMEKRFFSLTTVTYNIVIETFGKAGRIEKMDDVFRKMKYQGVKPNSITYCSLVNAYSKAGLVVKIDSVLRQIVNSDVVLDTPFFNCIINAYGQAGDLATMKELYIQMEERKCKPDKITFATMIKTYTAHGIFDAVQELEKQMISSGENLDIL.

PPR repeat units follow at residues 93-127, 128-158, 164-198, 199-233, 235-269, 270-304, 305-339, 340-374, 375-409, and 410-444; these read RCKT…GLKP, TIDV…MKSV, DVFT…GVGC, STVT…GDSL, DVCT…GVQP, DITT…FFSL, TTVT…GVKP, NSIT…DVVL, DTPF…KCKP, and DKIT…GENL.

This sequence belongs to the PPR family. P subfamily.

This Arabidopsis thaliana (Mouse-ear cress) protein is Pentatricopeptide repeat-containing protein At3g53170.